The chain runs to 282 residues: MSSYANHQALAGLTLGKSTDYRDTYDASLLQGVPRSLNRDPLGLKADNLPFHGTDIWTLYELSWLNAKGLPQVAVGHVELEYTSVNLIESKSFKLYLNSFNQTRFNNWDEVRQTLERDLSTCAQGKVSVALYRLDELEGQPIGHFNGTCIDDQDITIDNYEFTTDYLENATSGEKVVEETLVSHLLKSNCLITHQPDWGSIQIQYRGRQIDREKLLRYLVSFRHHNEFHEQCVERIFNDLLRFCQPEKLSVYARYTRRGGLDINPWRSNSDFVPSTTRLVRQ.

Residue 88–90 participates in substrate binding; it reads IES. 90–91 is an NADPH binding site; the sequence is SK. Catalysis depends on C190, which acts as the Thioimide intermediate. Catalysis depends on D197, which acts as the Proton donor. 229-230 serves as a coordination point for substrate; that stretch reads HE. 258–259 is a binding site for NADPH; that stretch reads RG.

Belongs to the GTP cyclohydrolase I family. QueF type 2 subfamily. As to quaternary structure, homodimer.

The protein resides in the cytoplasm. It catalyses the reaction 7-aminomethyl-7-carbaguanine + 2 NADP(+) = 7-cyano-7-deazaguanine + 2 NADPH + 3 H(+). Its pathway is tRNA modification; tRNA-queuosine biosynthesis. Functionally, catalyzes the NADPH-dependent reduction of 7-cyano-7-deazaguanine (preQ0) to 7-aminomethyl-7-deazaguanine (preQ1). The polypeptide is NADPH-dependent 7-cyano-7-deazaguanine reductase (Escherichia coli O45:K1 (strain S88 / ExPEC)).